Reading from the N-terminus, the 208-residue chain is MKFHSFLAAGLCLLTSLSASASIQLTVPSEVELLLVDSQEVKLDSSFFSTTSTLKLDDGEHQIVFRYNPVFKQGKDNIIVSSDIIVSKFTATNQDISFVFPSYNSPEKAKAFNTDLNWELKDQNDKNIPFAQAKLVYDGVQIGHNIQFELAKFNTTEHVAAFKQDMITVTHKEIKNEKGENTAEQMLNYWYEKADKETQERFKTSISN.

The first 21 residues, 1-21 (MKFHSFLAAGLCLLTSLSASA), serve as a signal peptide directing secretion.

The protein belongs to the UPF0319 family.

The sequence is that of UPF0319 protein VSAL_I2129 from Aliivibrio salmonicida (strain LFI1238) (Vibrio salmonicida (strain LFI1238)).